We begin with the raw amino-acid sequence, 119 residues long: Large ribosomal subunit protein bL19 (119 aa).

This sequence belongs to the bacterial ribosomal protein bL19 family.

This protein is located at the 30S-50S ribosomal subunit interface and may play a role in the structure and function of the aminoacyl-tRNA binding site. In Pseudoalteromonas atlantica (strain T6c / ATCC BAA-1087), this protein is Large ribosomal subunit protein bL19.